A 1757-amino-acid polypeptide reads, in one-letter code: 1-phosphatidylinositol-3-phosphate 5-kinase FAB1A (1757 aa).

Residues 36–102 (DQSCPVCYEC…VCNYCYKQWE (67 aa)) form an FYVE-type zinc finger. Residues C42, C45, C58, C61, C66, C69, C94, and C97 each coordinate Zn(2+). Disordered regions lie at residues 125–193 (ARSV…SDNQ), 276–297 (KTRQ…CEES), 313–346 (LPPE…YLRP), and 684–709 (AEKS…NFTS). The segment covering 134-145 (NSSNCTIDSTAG) has biased composition (polar residues). The span at 317 to 337 (PENEEDEREAVLSDDDGDEGD) shows a compositional bias: acidic residues. The stretch at 1014 to 1087 (LQKESKEVIK…LQQMLNVVKD (74 aa)) forms a coiled coil. Residues 1395-1719 (SFSLFDSVNL…RFRKAMTAYF (325 aa)) form the PIPK domain. Positions 1729 to 1739 (AAVVPSNSSSA) are enriched in low complexity. The segment at 1729 to 1757 (AAVVPSNSSSAEVKEEEEKDNPQAVGNKS) is disordered.

Component of the PI(3,5)P2 regulatory complex at least composed of ATG18, SAC/FIG4, FAB1 and VAC14. Mg(2+) serves as cofactor. Mn(2+) is required as a cofactor. In terms of tissue distribution, ubiquitous with highest expression levels in pollen, seed, and senescent leaves.

It localises to the endosome membrane. It carries out the reaction a 1,2-diacyl-sn-glycero-3-phospho-(1D-myo-inositol-3-phosphate) + ATP = a 1,2-diacyl-sn-glycero-3-phospho-(1D-myo-inositol-3,5-bisphosphate) + ADP + H(+). Functionally, the PI(3,5)P2 regulatory complex regulates both the synthesis and turnover of phosphatidylinositol 3,5-bisphosphate (PtdIns(3,5)P2). Catalyzes the phosphorylation of phosphatidylinositol 3-phosphate on the fifth hydroxyl of the myo-inositol ring, to form phosphatidylinositol 3,5-bisphosphate. Plays an important role in maintenance of endomembrane homeostasis including endocytosis, vacuole formation, and vacuolar acidification processes. Required for development of viable pollen. Might mediate recycling of auxin transporters. The sequence is that of 1-phosphatidylinositol-3-phosphate 5-kinase FAB1A (FAB1A) from Arabidopsis thaliana (Mouse-ear cress).